A 686-amino-acid chain; its full sequence is DNA ligase 1 (686 aa).

NAD(+)-binding positions include 35–39, 84–85, and E119; these read DFEYD and SL. K121 acts as the N6-AMP-lysine intermediate in catalysis. R142, E177, K293, and K317 together coordinate NAD(+). Residues C411, C414, C429, and C434 each coordinate Zn(2+). One can recognise a BRCT domain in the interval 602 to 686; that stretch reads RVGEQLAGLT…LAEKGAPPLP (85 aa).

Belongs to the NAD-dependent DNA ligase family. LigA subfamily. Mg(2+) is required as a cofactor. The cofactor is Mn(2+).

It carries out the reaction NAD(+) + (deoxyribonucleotide)n-3'-hydroxyl + 5'-phospho-(deoxyribonucleotide)m = (deoxyribonucleotide)n+m + AMP + beta-nicotinamide D-nucleotide.. DNA ligase that catalyzes the formation of phosphodiester linkages between 5'-phosphoryl and 3'-hydroxyl groups in double-stranded DNA using NAD as a coenzyme and as the energy source for the reaction. It is essential for DNA replication and repair of damaged DNA. This Deinococcus deserti (strain DSM 17065 / CIP 109153 / LMG 22923 / VCD115) protein is DNA ligase 1.